Here is a 737-residue protein sequence, read N- to C-terminus: DNA topoisomerase 4 subunit A (737 aa).

Residues 32 to 496 (LPDVRDGLKP…SFEEVTLTNQ (465 aa)) form the Topo IIA-type catalytic domain. Tyrosine 120 functions as the O-(5'-phospho-DNA)-tyrosine intermediate in the catalytic mechanism.

It belongs to the type II topoisomerase GyrA/ParC subunit family. ParC type 1 subfamily. Heterotetramer composed of ParC and ParE.

The protein localises to the cell membrane. It carries out the reaction ATP-dependent breakage, passage and rejoining of double-stranded DNA.. Its function is as follows. Topoisomerase IV is essential for chromosome segregation. It relaxes supercoiled DNA. Performs the decatenation events required during the replication of a circular DNA molecule. This chain is DNA topoisomerase 4 subunit A, found in Rickettsia felis (strain ATCC VR-1525 / URRWXCal2) (Rickettsia azadi).